The sequence spans 360 residues: Peptide chain release factor 1 (360 aa).

At Gln237 the chain carries N5-methylglutamine.

The protein belongs to the prokaryotic/mitochondrial release factor family. Post-translationally, methylated by PrmC. Methylation increases the termination efficiency of RF1.

It localises to the cytoplasm. Functionally, peptide chain release factor 1 directs the termination of translation in response to the peptide chain termination codons UAG and UAA. In Ectopseudomonas mendocina (strain ymp) (Pseudomonas mendocina), this protein is Peptide chain release factor 1.